Reading from the N-terminus, the 256-residue chain is Thiazole synthase (256 aa).

Catalysis depends on Lys-96, which acts as the Schiff-base intermediate with DXP. 1-deoxy-D-xylulose 5-phosphate contacts are provided by residues Gly-157, 183–184, and 205–206; these read AG and NT.

Belongs to the ThiG family. Homotetramer. Forms heterodimers with either ThiH or ThiS.

The protein resides in the cytoplasm. The catalysed reaction is [ThiS sulfur-carrier protein]-C-terminal-Gly-aminoethanethioate + 2-iminoacetate + 1-deoxy-D-xylulose 5-phosphate = [ThiS sulfur-carrier protein]-C-terminal Gly-Gly + 2-[(2R,5Z)-2-carboxy-4-methylthiazol-5(2H)-ylidene]ethyl phosphate + 2 H2O + H(+). Its pathway is cofactor biosynthesis; thiamine diphosphate biosynthesis. Catalyzes the rearrangement of 1-deoxy-D-xylulose 5-phosphate (DXP) to produce the thiazole phosphate moiety of thiamine. Sulfur is provided by the thiocarboxylate moiety of the carrier protein ThiS. In vitro, sulfur can be provided by H(2)S. This Bacillus cereus (strain 03BB102) protein is Thiazole synthase.